A 352-amino-acid chain; its full sequence is Chorismate synthase (352 aa).

Arginine 48 is an NADP(+) binding site. FMN contacts are provided by residues 125–127 (RSS), 238–239 (NA), glycine 278, 293–297 (KPTSS), and arginine 319.

It belongs to the chorismate synthase family. In terms of assembly, homotetramer. FMNH2 is required as a cofactor.

The catalysed reaction is 5-O-(1-carboxyvinyl)-3-phosphoshikimate = chorismate + phosphate. Its pathway is metabolic intermediate biosynthesis; chorismate biosynthesis; chorismate from D-erythrose 4-phosphate and phosphoenolpyruvate: step 7/7. In terms of biological role, catalyzes the anti-1,4-elimination of the C-3 phosphate and the C-6 proR hydrogen from 5-enolpyruvylshikimate-3-phosphate (EPSP) to yield chorismate, which is the branch point compound that serves as the starting substrate for the three terminal pathways of aromatic amino acid biosynthesis. This reaction introduces a second double bond into the aromatic ring system. This Legionella pneumophila subsp. pneumophila (strain Philadelphia 1 / ATCC 33152 / DSM 7513) protein is Chorismate synthase.